Here is a 487-residue protein sequence, read N- to C-terminus: UDP-N-acetylmuramoyl-L-alanyl-D-glutamate--2,6-diaminopimelate ligase (487 aa).

UDP-N-acetyl-alpha-D-muramoyl-L-alanyl-D-glutamate contacts are provided by Leu23 and Ser25. 108–114 (GTNGKTS) is a binding site for ATP. UDP-N-acetyl-alpha-D-muramoyl-L-alanyl-D-glutamate-binding positions include 150 to 151 (TT), Ser177, Gln183, and Arg185. Lys217 is modified (N6-carboxylysine). Residues Arg378, 402 to 405 (DNPR), Gly453, and Glu457 contribute to the meso-2,6-diaminopimelate site. Positions 402–405 (DNPR) match the Meso-diaminopimelate recognition motif motif.

This sequence belongs to the MurCDEF family. MurE subfamily. The cofactor is Mg(2+). Post-translationally, carboxylation is probably crucial for Mg(2+) binding and, consequently, for the gamma-phosphate positioning of ATP.

It is found in the cytoplasm. It carries out the reaction UDP-N-acetyl-alpha-D-muramoyl-L-alanyl-D-glutamate + meso-2,6-diaminopimelate + ATP = UDP-N-acetyl-alpha-D-muramoyl-L-alanyl-gamma-D-glutamyl-meso-2,6-diaminopimelate + ADP + phosphate + H(+). The protein operates within cell wall biogenesis; peptidoglycan biosynthesis. Functionally, catalyzes the addition of meso-diaminopimelic acid to the nucleotide precursor UDP-N-acetylmuramoyl-L-alanyl-D-glutamate (UMAG) in the biosynthesis of bacterial cell-wall peptidoglycan. The protein is UDP-N-acetylmuramoyl-L-alanyl-D-glutamate--2,6-diaminopimelate ligase of Pseudomonas aeruginosa (strain ATCC 15692 / DSM 22644 / CIP 104116 / JCM 14847 / LMG 12228 / 1C / PRS 101 / PAO1).